The primary structure comprises 1417 residues: DNA-directed RNA polymerase subunit beta' (1417 aa).

Zn(2+) contacts are provided by Cys68, Cys70, Cys83, and Cys86. Mg(2+) is bound by residues Asp458, Asp460, and Asp462. Residues Cys811, Cys884, Cys891, and Cys894 each coordinate Zn(2+).

This sequence belongs to the RNA polymerase beta' chain family. In terms of assembly, the RNAP catalytic core consists of 2 alpha, 1 beta, 1 beta' and 1 omega subunit. When a sigma factor is associated with the core the holoenzyme is formed, which can initiate transcription. Requires Mg(2+) as cofactor. Zn(2+) is required as a cofactor.

The enzyme catalyses RNA(n) + a ribonucleoside 5'-triphosphate = RNA(n+1) + diphosphate. Its function is as follows. DNA-dependent RNA polymerase catalyzes the transcription of DNA into RNA using the four ribonucleoside triphosphates as substrates. This Francisella tularensis subsp. holarctica (strain OSU18) protein is DNA-directed RNA polymerase subunit beta'.